The chain runs to 460 residues: Kynurenine 3-monooxygenase (460 aa).

Residues Val-13, Asp-32–Arg-34, and Ala-53 each bind FAD. Arg-83 and Tyr-97 together coordinate L-kynurenine. FAD contacts are provided by residues Arg-109, Leu-133, Tyr-195, Asp-314, and Gln-325–Asn-328. Residues Asn-373 and Tyr-408 each coordinate L-kynurenine.

Belongs to the aromatic-ring hydroxylase family. KMO subfamily. FAD serves as cofactor.

The protein resides in the mitochondrion outer membrane. The catalysed reaction is L-kynurenine + NADPH + O2 + H(+) = 3-hydroxy-L-kynurenine + NADP(+) + H2O. The protein operates within cofactor biosynthesis; NAD(+) biosynthesis; quinolinate from L-kynurenine: step 1/3. In terms of biological role, catalyzes the hydroxylation of L-kynurenine (L-Kyn) to form 3-hydroxy-L-kynurenine (L-3OHKyn). Required for synthesis of quinolinic acid. This is Kynurenine 3-monooxygenase from Saccharomyces cerevisiae (strain ATCC 204508 / S288c) (Baker's yeast).